We begin with the raw amino-acid sequence, 454 residues long: Protein odr-4 homolog (454 aa).

The next 2 membrane-spanning stretches (helical) occupy residues 82–102 (MLPG…ELAN) and 432–452 (IGVI…FHYF).

Belongs to the ODR-4 family. Ubiquitously expressed.

The protein resides in the membrane. In terms of biological role, may play a role in the trafficking of a subset of G-protein coupled receptors. This chain is Protein odr-4 homolog, found in Homo sapiens (Human).